The chain runs to 332 residues: Abl interactor homolog (332 aa).

Residues 73-104 are a coiled coil; it reads HITSLLQLQTNEMEKLNIEIQTLTQRVRMIHD. The interval 152–332 is disordered; it reads SDINQNGVPP…NDFPPPPPPM (181 aa). The span at 164 to 206 shows a compositional bias: low complexity; the sequence is NHSNSSANLTSSSGHLAASSTSNSSTPSYQSPSYSSQPTISSG. Pro residues predominate over residues 221-247; that stretch reads APPPPSLSVPAAPPPPVMNVPPPPPTS. Polar residues predominate over residues 248-257; the sequence is QRPSSVNNNA. Over residues 277 to 314 the composition is skewed to pro residues; that stretch reads LPPPPSFGLPPPPTLGDDFPPPPPPPVGSYDFPPPPAR.

It belongs to the ABI family. As to quaternary structure, part of a Scar/WAVE complex containing brk1, scrA, abiA, pirA and napA. Interacts with scrA.

Its function is as follows. Involved in regulation of actin and microtubule organization. Required for proper cytokinesis. The chain is Abl interactor homolog (abiA) from Dictyostelium discoideum (Social amoeba).